Here is a 1054-residue protein sequence, read N- to C-terminus: Kinesin-like protein KIN-7G (1054 aa).

The Kinesin motor domain occupies 17–341 (KIFVSVRLRP…LLFASCAKEV (325 aa)). 105 to 112 (GQTSSGKT) contributes to the ATP binding site. 2 coiled-coil regions span residues 350 to 425 (VMSD…IGEA) and 611 to 640 (TETAEEKEEKEETEEKEEEEEERVKEVSSV). 2 disordered regions span residues 600-648 (CEPE…KEKS) and 740-760 (ERAESNLKPSNSKRPPLPKHI). The segment covering 613–631 (TAEEKEEKEETEEKEEEEE) has biased composition (acidic residues).

It belongs to the TRAFAC class myosin-kinesin ATPase superfamily. Kinesin family. KIN-7 subfamily.

This is Kinesin-like protein KIN-7G from Arabidopsis thaliana (Mouse-ear cress).